The chain runs to 292 residues: NADH-ubiquinone oxidoreductase chain 1 (292 aa).

Helical transmembrane passes span 2–22 (IVAS…MFTL), 71–91 (FAAS…GICI), 98–118 (GLVI…AGWA), 132–152 (VALM…IGLF), 167–187 (MPTT…VCIL), 213–233 (LGFA…SAIA), 235–255 (IYFL…AFVW), and 272–292 (GWKA…SVAI).

The protein belongs to the complex I subunit 1 family.

It localises to the mitochondrion inner membrane. The enzyme catalyses a ubiquinone + NADH + 5 H(+)(in) = a ubiquinol + NAD(+) + 4 H(+)(out). In terms of biological role, core subunit of the mitochondrial membrane respiratory chain NADH dehydrogenase (Complex I) that is believed to belong to the minimal assembly required for catalysis. Complex I functions in the transfer of electrons from NADH to the respiratory chain. The immediate electron acceptor for the enzyme is believed to be ubiquinone. This is NADH-ubiquinone oxidoreductase chain 1 (ND1) from Chlamydomonas reinhardtii (Chlamydomonas smithii).